Consider the following 376-residue polypeptide: Chaperone protein DnaJ (376 aa).

Residues 5 to 70 (DYYEILGVSK…QKRAAYDQYG (66 aa)) enclose the J domain. The segment at 131 to 209 (GVTKEIRIPT…CHGHGRVERS (79 aa)) adopts a CR-type zinc-finger fold. 8 residues coordinate Zn(2+): Cys-144, Cys-147, Cys-161, Cys-164, Cys-183, Cys-186, Cys-197, and Cys-200. CXXCXGXG motif repeat units lie at residues 144–151 (CDVCHGSG), 161–168 (CPTCHGSG), 183–190 (CPHCQGRG), and 197–204 (CNKCHGHG).

Belongs to the DnaJ family. In terms of assembly, homodimer. It depends on Zn(2+) as a cofactor.

The protein resides in the cytoplasm. In terms of biological role, participates actively in the response to hyperosmotic and heat shock by preventing the aggregation of stress-denatured proteins and by disaggregating proteins, also in an autonomous, DnaK-independent fashion. Unfolded proteins bind initially to DnaJ; upon interaction with the DnaJ-bound protein, DnaK hydrolyzes its bound ATP, resulting in the formation of a stable complex. GrpE releases ADP from DnaK; ATP binding to DnaK triggers the release of the substrate protein, thus completing the reaction cycle. Several rounds of ATP-dependent interactions between DnaJ, DnaK and GrpE are required for fully efficient folding. Also involved, together with DnaK and GrpE, in the DNA replication of plasmids through activation of initiation proteins. In Shigella dysenteriae serotype 1 (strain Sd197), this protein is Chaperone protein DnaJ.